Consider the following 302-residue polypeptide: F-box protein SKIP19 (302 aa).

Residues 16-63 (STNWTELPPELTSAILHRLGAIEILENAQKVCRSWRRVCKDPSMWRKI) form the F-box domain.

As to quaternary structure, part of a SCF (ASK-cullin-F-box) protein ligase complex. Interacts with CUL1 and SPK1B/ASK2.

The protein localises to the nucleus. It functions in the pathway protein modification; protein ubiquitination. Functionally, component of SCF(ASK-cullin-F-box) E3 ubiquitin ligase complexes, which may mediate the ubiquitination and subsequent proteasomal degradation of target proteins. This chain is F-box protein SKIP19 (SKIP19), found in Arabidopsis thaliana (Mouse-ear cress).